A 307-amino-acid polypeptide reads, in one-letter code: G-protein coupled receptor 35 (307 aa).

At 1–18 (MNSTTCNSTLTWPASVNN) the chain is on the extracellular side. N-linked (GlcNAc...) asparagine glycans are attached at residues N2 and N7. A helical transmembrane segment spans residues 19–39 (FFIIYSALLLVLGLLLNSVAL). Residues 40 to 53 (WVFCYRMHQWTETR) lie on the Cytoplasmic side of the membrane. A helical transmembrane segment spans residues 54–74 (IYMTNLAVADLCLLCSLPFVL). Topologically, residues 75 to 88 (YSLKYSSSDTPVCQ) are extracellular. Cysteines 87 and 160 form a disulfide. Residues 89–110 (LSQGIYLANRYMSISLVTAIAV) traverse the membrane as a helical segment. The Cytoplasmic portion of the chain corresponds to 111-129 (DRYVAVRHPLRARELRSPR). Residues 130–150 (QAAAVCVALWVIVVTSLVVRW) form a helical membrane-spanning segment. The Extracellular segment spans residues 151–176 (RLGMQEGGFCFSSQTRRNFSTTAFSL). Residues 177–197 (LGFYLPLAIVVFCSLQVVTVL) traverse the membrane as a helical segment. Topologically, residues 198–217 (SRRPAADVGQAEATQKATHM) are cytoplasmic. A helical membrane pass occupies residues 218–238 (VWANLAVFVICFLPLHVVLTV). Residues 239–257 (QVSLNLNTCAARDTFSRAL) lie on the Extracellular side of the membrane. The chain crosses the membrane as a helical span at residues 258 to 278 (SITGKLSDTNCCLDAICYYYM). Residues 279-307 (AREFQEASKPATSSNTPHKSQDSQILSLT) are Cytoplasmic-facing. Phosphoserine occurs at positions 286, 292, 298, and 301. A disordered region spans residues 288–307 (PATSSNTPHKSQDSQILSLT).

Belongs to the G-protein coupled receptor 1 family. Multiply phosphorylated in clusters of serines and threonines in the C-terminal tail. Phosphorylation of Ser-298 and Ser-301 is mediated by GRK5 and/or GRK6. Predominantly expressed in immune and gastrointestinal tissues. Strongly GPR35 expressed in colonic macrophages.

It localises to the cell membrane. Functionally, G-protein coupled receptor that binds to several ligands including the tryptophan metabolite kynurenic acid (KYNA), lysophosphatidic acid (LPA) or 5-hydroxyindoleacetic acid (5-HIAA) with high affinity, leading to rapid and transient activation of numerous intracellular signaling pathways. Plays a role in neutrophil recruitment to sites of inflammation and bacterial clearance through the major serotonin metabolite 5-HIAA that acts as a physiological ligand. Stimulates lipid metabolism, thermogenic, and anti-inflammatory gene expression in adipose tissue once activated by kynurenic acid. In macrophages, activation by lysophosphatidic acid promotes GPR35-induced signaling with a distinct transcriptional profile characterized by TNF production associated with ERK and NF-kappa-B activation. In turn, induces chemotaxis of macrophages. The polypeptide is G-protein coupled receptor 35 (Gpr35) (Mus musculus (Mouse)).